The primary structure comprises 357 residues: S-adenosyl-L-methionine:benzoic acid/salicylic acid carboxyl methyltransferase 1 (357 aa).

Position 18 (Tyr18) interacts with S-adenosyl-L-homocysteine. Residue Gln25 participates in benzoate binding. S-adenosyl-L-homocysteine is bound by residues Cys59, Asn64, Asp96, Leu97, Ser135, and Phe136. Position 157 (Trp157) interacts with benzoate. The Mg(2+) site is built by Asn168, Asp254, Phe256, and Asn257. Gln260 lines the benzoate pocket.

It belongs to the methyltransferase superfamily. Type-7 methyltransferase family. Predominantly expressed in petal limbs and tubes of corollas.

The enzyme catalyses benzoate + S-adenosyl-L-methionine = methyl benzoate + S-adenosyl-L-homocysteine. It catalyses the reaction salicylate + S-adenosyl-L-methionine = methyl salicylate + S-adenosyl-L-homocysteine. The protein operates within aromatic compound metabolism. Its function is as follows. Converts benzoic acid into the volatile ester methyl benzoates. This scent, mostly produced in a rhythmical, diurnal manner, attracts the pollinators. In Petunia hybrida (Petunia), this protein is S-adenosyl-L-methionine:benzoic acid/salicylic acid carboxyl methyltransferase 1.